Consider the following 317-residue polypeptide: Porphobilinogen deaminase (317 aa).

C240 carries the post-translational modification S-(dipyrrolylmethanemethyl)cysteine.

The protein belongs to the HMBS family. Monomer. The cofactor is dipyrromethane.

The catalysed reaction is 4 porphobilinogen + H2O = hydroxymethylbilane + 4 NH4(+). Its pathway is porphyrin-containing compound metabolism; protoporphyrin-IX biosynthesis; coproporphyrinogen-III from 5-aminolevulinate: step 2/4. Functionally, tetrapolymerization of the monopyrrole PBG into the hydroxymethylbilane pre-uroporphyrinogen in several discrete steps. The chain is Porphobilinogen deaminase from Nitratidesulfovibrio vulgaris (strain DSM 19637 / Miyazaki F) (Desulfovibrio vulgaris).